The following is a 968-amino-acid chain: Protein translocase subunit SecA 1 (968 aa).

Residues Gln-86, 104 to 108 (GEGKT), and Asp-493 each bind ATP. 2 stretches are compositionally biased toward basic and acidic residues: residues 858–868 (EAEKTEDKAED) and 883–898 (ESAK…ESVA). A disordered region spans residues 858–968 (EAEKTEDKAE…KCHGAPKSRV (111 aa)). Zn(2+)-binding residues include Cys-949, Cys-951, Cys-960, and His-961. Residues 955-968 (KKYKKCHGAPKSRV) are compositionally biased toward basic residues.

This sequence belongs to the SecA family. In terms of assembly, monomer and homodimer. Part of the essential Sec protein translocation apparatus which comprises SecA, SecYEG and auxiliary proteins SecDF. Other proteins may also be involved. The cofactor is Zn(2+).

Its subcellular location is the cell membrane. The protein localises to the cytoplasm. The enzyme catalyses ATP + H2O + cellular proteinSide 1 = ADP + phosphate + cellular proteinSide 2.. Functionally, part of the Sec protein translocase complex. Interacts with the SecYEG preprotein conducting channel. Has a central role in coupling the hydrolysis of ATP to the transfer of proteins into and across the cell membrane, serving as an ATP-driven molecular motor driving the stepwise translocation of polypeptide chains across the membrane. The protein is Protein translocase subunit SecA 1 of Thermobifida fusca (strain YX).